Reading from the N-terminus, the 982-residue chain is Protein cramped (982 aa).

5 disordered regions span residues 1–37 (MEEL…GGGA), 71–111 (QKMK…GSGK), 323–349 (SLPS…ASLD), 407–456 (NKRL…SSGD), and 822–851 (GTSS…QEPG). Positions 7–20 (QPPPPPLTQPPPPS) are enriched in pro residues. A compositionally biased stretch (low complexity) spans 21 to 30 (SSVSIEEPLP). Positions 86 to 98 (SEREPNKKEEKAA) are enriched in basic and acidic residues. The segment covering 100–111 (KTPSQLKTGSGK) has biased composition (polar residues). The SANT domain maps to 109-173 (SGKTTWTNVE…HYYQTHHKIC (65 aa)). The span at 410–425 (LRTESGSEKRSPETKK) shows a compositional bias: basic and acidic residues. Residues S431 and S437 each carry the phosphoserine modification. Over residues 822 to 833 (GTSSAGISTSGS) the composition is skewed to low complexity.

This sequence belongs to the cramped family. Ubiquitously expressed throughout embryonic development. High expression is detected in CNS and gonads.

Its subcellular location is the nucleus. In terms of biological role, polycomb group (Pc-G) genes are needed to maintain expression patterns of the homeotic selector genes of the Antennapedia (Antp-C) and Bithorax (Bx-C) complexes, and hence for the maintenance of segmental determination. Can act as a modifier of position effect variegation (PEV). This is Protein cramped (crm) from Drosophila melanogaster (Fruit fly).